Here is a 590-residue protein sequence, read N- to C-terminus: Aspartate--tRNA(Asp/Asn) ligase (590 aa).

Residue Glu-175 coordinates L-aspartate. The tract at residues 199–202 (QQYK) is aspartate. Arg-221 and His-450 together coordinate L-aspartate. 221–223 (RDE) provides a ligand contact to ATP. ATP is bound at residue Glu-484. Arg-491 lines the L-aspartate pocket. 536 to 539 (GVDR) lines the ATP pocket.

It belongs to the class-II aminoacyl-tRNA synthetase family. Type 1 subfamily. In terms of assembly, homodimer.

Its subcellular location is the cytoplasm. The catalysed reaction is tRNA(Asx) + L-aspartate + ATP = L-aspartyl-tRNA(Asx) + AMP + diphosphate. Aspartyl-tRNA synthetase with relaxed tRNA specificity since it is able to aspartylate not only its cognate tRNA(Asp) but also tRNA(Asn). Reaction proceeds in two steps: L-aspartate is first activated by ATP to form Asp-AMP and then transferred to the acceptor end of tRNA(Asp/Asn). This chain is Aspartate--tRNA(Asp/Asn) ligase, found in Rhodopseudomonas palustris (strain HaA2).